A 304-amino-acid chain; its full sequence is Acetylglutamate kinase (304 aa).

Residues 75 to 76 (GG), Arg-97, and Asn-202 contribute to the substrate site.

This sequence belongs to the acetylglutamate kinase family. ArgB subfamily.

The protein localises to the cytoplasm. The enzyme catalyses N-acetyl-L-glutamate + ATP = N-acetyl-L-glutamyl 5-phosphate + ADP. It participates in amino-acid biosynthesis; L-arginine biosynthesis; N(2)-acetyl-L-ornithine from L-glutamate: step 2/4. In terms of biological role, catalyzes the ATP-dependent phosphorylation of N-acetyl-L-glutamate. The sequence is that of Acetylglutamate kinase from Parvibaculum lavamentivorans (strain DS-1 / DSM 13023 / NCIMB 13966).